A 403-amino-acid polypeptide reads, in one-letter code: Exodeoxyribonuclease 7 large subunit (403 aa).

This sequence belongs to the XseA family. In terms of assembly, heterooligomer composed of large and small subunits.

The protein resides in the cytoplasm. It carries out the reaction Exonucleolytic cleavage in either 5'- to 3'- or 3'- to 5'-direction to yield nucleoside 5'-phosphates.. Its function is as follows. Bidirectionally degrades single-stranded DNA into large acid-insoluble oligonucleotides, which are then degraded further into small acid-soluble oligonucleotides. The sequence is that of Exodeoxyribonuclease 7 large subunit from Clostridium botulinum (strain Okra / Type B1).